Here is a 384-residue protein sequence, read N- to C-terminus: Soluble hydrogenase, small subunit (384 aa).

The residue at position 194 (K194) is an N6-(pyridoxal phosphate)lysine.

It belongs to the class-V pyridoxal-phosphate-dependent aminotransferase family. In terms of assembly, heterodimer of a large and a small subunit. It depends on pyridoxal 5'-phosphate as a cofactor.

Its subcellular location is the cytoplasm. Its function is as follows. Soluble hydrogenase catalyzes both production and consumption of hydrogen from suitable artificial electron donors or acceptors. This subunit catalyzes the tritium-exchange activity. The chain is Soluble hydrogenase, small subunit from Synechococcus sp. (strain PCC 6716).